A 161-amino-acid chain; its full sequence is Putative 4-hydroxy-4-methyl-2-oxoglutarate aldolase (161 aa).

Substrate-binding positions include 75 to 78 (GDQL) and Arg97. Position 98 (Asp98) interacts with a divalent metal cation.

Belongs to the class II aldolase/RraA-like family. In terms of assembly, homotrimer. It depends on a divalent metal cation as a cofactor.

It carries out the reaction 4-hydroxy-4-methyl-2-oxoglutarate = 2 pyruvate. The enzyme catalyses oxaloacetate + H(+) = pyruvate + CO2. In terms of biological role, catalyzes the aldol cleavage of 4-hydroxy-4-methyl-2-oxoglutarate (HMG) into 2 molecules of pyruvate. Also contains a secondary oxaloacetate (OAA) decarboxylase activity due to the common pyruvate enolate transition state formed following C-C bond cleavage in the retro-aldol and decarboxylation reactions. The sequence is that of Putative 4-hydroxy-4-methyl-2-oxoglutarate aldolase from Vibrio cholerae serotype O1 (strain ATCC 39315 / El Tor Inaba N16961).